Reading from the N-terminus, the 833-residue chain is CUB domain-containing protein 1 (833 aa).

An N-terminal signal peptide occupies residues 1–29; the sequence is MAHSACGFSVALLGALLLGTARLLRGTEA. The Extracellular segment spans residues 30 to 666; sequence SEIALPQRSG…VTLTPRTVDL (637 aa). N-linked (GlcNAc...) asparagine glycans are attached at residues N122, N180, N205, N270, N310, N342, and N386. The CUB domain maps to 417–540; it reads CLDHRYCYRQ…QGLIVSYTPY (124 aa). A disulfide bridge links C476 with C499. The chain crosses the membrane as a helical span at residues 667–687; that stretch reads AVVIGAAGGGALLLFALVLII. Residues 688–833 are Cytoplasmic-facing; the sequence is CFVKKKKKVD…HTQGPVETEE (146 aa). A Phosphotyrosine modification is found at Y731. Positions 783-833 are disordered; the sequence is AKFTAEELAPSSPPESESEPYTFSHPNKGEIGVRETDIPLLHTQGPVETEE. Over residues 809–819 the composition is skewed to basic and acidic residues; it reads NKGEIGVRETD.

In terms of assembly, interacts with CDH2/N-cadherin, CDH3/P-cadherin, SDC1/syndecan-1, SDC4/syndecan-4 and the serine protease ST14/MT-SP1. Also interacts SRC and PRKCG/protein kinase C gamma. Phosphorylated on tyrosine by kinases of the SRC family such as SRC and YES as well as by the protein kinase C gamma/PRKCG. Dephosphorylated by phosphotyrosine phosphatases. Also phosphorylated by suramin, a heparin analog. Tyrosine phosphorylated in response to dissociation of integrin alpha-6 beta-4 from laminin-5. Post-translationally, N-glycosylated. In terms of processing, a soluble form may also be produced by proteolytic cleavage at the cell surface (shedding). Another peptide of 80 kDa (p80) is present in cultured keratinocytes probably due to tryptic cleavage at an unidentified site on the N-terminal side. Converted to p80 by plasmin, a trypsin-like protease.

The protein resides in the cell membrane. Its function is as follows. May be involved in cell adhesion and cell matrix association. May play a role in the regulation of anchorage versus migration or proliferation versus differentiation via its phosphorylation. May be a novel marker for leukemia diagnosis and for immature hematopoietic stem cell subsets. Belongs to the tetraspanin web involved in tumor progression and metastasis. The polypeptide is CUB domain-containing protein 1 (Cdcp1) (Mus musculus (Mouse)).